Consider the following 498-residue polypeptide: MLQCRPAQEFSFGPRALKDALVSTDAALQQLYVSAFSPAERLFLAEAYNPQRTLFCTLLIRTGFDWLLSRPEAPEDFQTFHASLQHRKPRLARKHIYLQPIDLSEEPVGSSLLHQLCSCTEAFFLGLRVKCLPSVAAASIRCSSRPSRDSDRLQLHTDGILSFLKNNKPGDALCVLGLTLSDLYPHEAWSFTFSKFLPGHEVGVCSFARFSGEFPKSGPSAPDLALVEAAADGPEAPLQDRGWALCFSALGMVQCCKVTCHELCHLLGLGNCRWLRCLMQGALSLDEALRRPLDLCPICLRKLQHVLGFRLIERYQRLYTWTQAVVGTWPSQEAGEPSVWEDTPPASADSGMCCESDSEPGTSVSEPLTPDAGSHTFASGPEEGLSYLAASEAPLPPGGPAEAIKEHERWLAMCIQALQREVAEEDLVQVDRAVDALDRWEMFTGQLPATRQDPPSSRDSVGLRKVLGDKFSSLRRKLSARKLARAESAPRPWDGEES.

Histidine 261 contributes to the Zn(2+) binding site. Catalysis depends on glutamate 262, which acts as the Proton acceptor. Residues histidine 265, cysteine 272, cysteine 277, cysteine 296, and cysteine 299 each coordinate Zn(2+). Residues 332–381 (QEAGEPSVWEDTPPASADSGMCCESDSEPGTSVSEPLTPDAGSHTFASGP) form a disordered region.

Belongs to the peptidase M54 family. Zn(2+) is required as a cofactor.

Functionally, probable zinc metalloprotease. The sequence is that of Archaemetzincin-1 (AMZ1) from Homo sapiens (Human).